The sequence spans 415 residues: Transcription termination factor Rho (415 aa).

Residues alanine 52–threonine 119 form the Rho RNA-BD domain. ATP-binding positions include glycine 161–glycine 166, lysine 173–valine 178, and arginine 204.

Belongs to the Rho family. In terms of assembly, homohexamer. The homohexamer assembles into an open ring structure.

Its function is as follows. Facilitates transcription termination by a mechanism that involves Rho binding to the nascent RNA, activation of Rho's RNA-dependent ATPase activity, and release of the mRNA from the DNA template. The sequence is that of Transcription termination factor Rho from Streptomyces coelicolor (strain ATCC BAA-471 / A3(2) / M145).